A 611-amino-acid chain; its full sequence is Beta-hexosaminidase (611 aa).

This sequence belongs to the glycosyl hydrolase 20 family. In terms of assembly, homodimer.

The protein resides in the periplasm. The catalysed reaction is Hydrolysis of terminal non-reducing N-acetyl-D-hexosamine residues in N-acetyl-beta-D-hexosaminides.. It participates in glycan degradation; chitin degradation. With respect to regulation, inhibited by mercuric ions, PNP-beta-Glc, PNP-beta-Gal, PNP-alpha-GlcNAc, and PNP-beta-S-GlcNAc. Its function is as follows. Hydrolyzes aryl-N-acetyl-beta-D-glucosaminide (aryl-beta-GlcNAc), aryl-beta-GalNAc and chitin oligosaccharides. Can hydrolyze rapidly the artificial substrates p-nitrophenyl-N-acetyl-beta-D-glucosaminide (PNP-beta-GlcNAc) and 4-methylumbelliferyl-beta-GlcNAc, and is slightly active on p-nitrophenyl-beta-GalNAc. This enzyme is not processive, i.e. when it hydrolyzes (GlcNAc)n, both products, (Glc-NAc)n-1 and the terminal GlcNAc, are released before the enzyme attacks a second molecule of (GlcNAc)n or (GlcNAc)n-1. In Vibrio furnissii, this protein is Beta-hexosaminidase.